The following is a 382-amino-acid chain: Lipid-A-disaccharide synthase (382 aa).

It belongs to the LpxB family.

The catalysed reaction is 2-N,3-O-bis[(3R)-3-hydroxytetradecanoyl]-alpha-D-glucosaminyl 1-phosphate + UDP-2-N,3-O-bis[(3R)-3-hydroxytetradecanoyl]-alpha-D-glucosamine = lipid A disaccharide (E. coli) + UDP + H(+). It carries out the reaction a lipid X + a UDP-2-N,3-O-bis[(3R)-3-hydroxyacyl]-alpha-D-glucosamine = a lipid A disaccharide + UDP + H(+). It functions in the pathway glycolipid biosynthesis; lipid IV(A) biosynthesis; lipid IV(A) from (3R)-3-hydroxytetradecanoyl-[acyl-carrier-protein] and UDP-N-acetyl-alpha-D-glucosamine: step 5/6. Its function is as follows. Condensation of UDP-2,3-diacylglucosamine and 2,3-diacylglucosamine-1-phosphate to form lipid A disaccharide, a precursor of lipid A, a phosphorylated glycolipid that anchors the lipopolysaccharide to the outer membrane of the cell. The chain is Lipid-A-disaccharide synthase from Escherichia coli (strain K12 / MC4100 / BW2952).